The chain runs to 323 residues: Acetyl esterase (323 aa).

The Involved in the stabilization of the negatively charged intermediate by the formation of the oxyanion hole motif lies at 91–93 (HGG). Residues Ser165, Asp262, and His292 contribute to the active site.

The protein belongs to the 'GDXG' lipolytic enzyme family. As to quaternary structure, homodimer. Interacts with MalT and MelA.

The protein localises to the cytoplasm. Its function is as follows. Displays esterase activity towards short chain fatty esters (acyl chain length of up to 8 carbons). Able to hydrolyze triacetylglycerol (triacetin) and tributyrylglycerol (tributyrin), but not trioleylglycerol (triolein) or cholesterol oleate. Negatively regulates MalT activity by antagonizing maltotriose binding. Inhibits MelA galactosidase activity. The protein is Acetyl esterase of Salmonella paratyphi A (strain ATCC 9150 / SARB42).